Here is a 447-residue protein sequence, read N- to C-terminus: Argininosuccinate synthase (447 aa).

ATP contacts are provided by residues 17 to 25 and Ala43; that span reads AFSGGLDTS. Position 99 (Tyr99) interacts with L-citrulline. ATP contacts are provided by Gly129 and Thr131. Residues Thr131, Asn135, and Asp136 each contribute to the L-aspartate site. Asn135 is a binding site for L-citrulline. Asp136 lines the ATP pocket. Arg139 and Ser192 together coordinate L-citrulline. Asp194 is an ATP binding site. L-citrulline contacts are provided by Thr201, Glu203, and Glu280.

Belongs to the argininosuccinate synthase family. Type 2 subfamily. Homotetramer.

Its subcellular location is the cytoplasm. It carries out the reaction L-citrulline + L-aspartate + ATP = 2-(N(omega)-L-arginino)succinate + AMP + diphosphate + H(+). Its pathway is amino-acid biosynthesis; L-arginine biosynthesis; L-arginine from L-ornithine and carbamoyl phosphate: step 2/3. The protein is Argininosuccinate synthase of Klebsiella pneumoniae subsp. pneumoniae (strain ATCC 700721 / MGH 78578).